Here is a 397-residue protein sequence, read N- to C-terminus: E3 ubiquitin-protein ligase RNF149 (397 aa).

The first 20 residues, Met1–Ala20, serve as a signal peptide directing secretion. A compositionally biased stretch (polar residues) spans Thr39–Ser49. The segment at Thr39–Ser60 is disordered. Asn40 and Asn140 each carry an N-linked (GlcNAc...) asparagine glycan. The PA domain maps to Tyr83–Leu170. Residues Val196 to Phe216 form a helical membrane-spanning segment. Residue Asn231 is glycosylated (N-linked (GlcNAc...) asparagine). Residues Cys264–Lys305 form an RING-type; atypical zinc finger. A disordered region spans residues Ser341–His397. Residues Gly351–Ser368 are compositionally biased toward low complexity. The span at Ala388–His397 shows a compositional bias: polar residues.

It localises to the membrane. It catalyses the reaction S-ubiquitinyl-[E2 ubiquitin-conjugating enzyme]-L-cysteine + [acceptor protein]-L-lysine = [E2 ubiquitin-conjugating enzyme]-L-cysteine + N(6)-ubiquitinyl-[acceptor protein]-L-lysine.. It functions in the pathway protein modification; protein ubiquitination. Functionally, E3 ubiquitin-protein ligase. Ubiquitinates BRAF, inducing its proteasomal degradation. The sequence is that of E3 ubiquitin-protein ligase RNF149 (rnf149) from Xenopus laevis (African clawed frog).